The chain runs to 346 residues: MKLTSEKLPKNPFSLSQYAAKQQTFFQWKKEKPDYYRHANLVDTALQFLKERIRKGDAMAYFLRGQLYFEEGWYEEALAQFEEIQEKDHQAIYQLGVMYYDGLGTVADAEKGVGYMKKILDSSCPQTMHLKFAAAYNLGRAYFEGKGVKRSDEEAERLWLYAADNGNPKASVKAQSILGLFYSMKEPKDLEKAFFWHSEACGNGNLESQGALGLMYLYGQGIRQDTDAALHCLREAAERGNVYAQGILVEYYYKMKFFTKCVSFSKRIADYDEVHDIPMIAHVTDCLPEFISKGMAMASFYYARCLQLGLGITKDEASAKHYYSKACRLNPTLADELHSLLIHQRI.

Residues 58-91 (AMAYFLRGQLYFEEGWYEEALAQFEEIQEKDHQA) form a TPR repeat. Sel1-like repeat units lie at residues 92 to 124 (IYQL…DSSC), 132 to 167 (FAAA…DNGN), 172 to 205 (VKAQ…GNGN), 206 to 241 (LESQ…ERGN), 242 to 276 (VYAQ…EVHD), and 296 to 331 (AMAS…RLNP).

Interacts with LRP2.

The protein resides in the cytoplasm. May act as an adapter that regulates LRP2 function. The chain is LRP2-binding protein (Lrp2bp) from Rattus norvegicus (Rat).